We begin with the raw amino-acid sequence, 199 residues long: Probable molybdenum cofactor guanylyltransferase (199 aa).

GTP is bound by residues Leu6–Gly8, Lys18, Asp65, and Asp97. Asp97 contributes to the Mg(2+) binding site.

It belongs to the MobA family. The cofactor is Mg(2+).

Its subcellular location is the cytoplasm. The catalysed reaction is Mo-molybdopterin + GTP + H(+) = Mo-molybdopterin guanine dinucleotide + diphosphate. Its function is as follows. Transfers a GMP moiety from GTP to Mo-molybdopterin (Mo-MPT) cofactor (Moco or molybdenum cofactor) to form Mo-molybdopterin guanine dinucleotide (Mo-MGD) cofactor. This Staphylococcus aureus (strain COL) protein is Probable molybdenum cofactor guanylyltransferase.